We begin with the raw amino-acid sequence, 278 residues long: Putative ABC transporter ATP-binding protein MTBMA_c05830 (278 aa).

The ABC transporter domain occupies isoleucine 4–arginine 239. Glycine 37 to serine 44 is a binding site for ATP.

This sequence belongs to the ABC transporter superfamily.

It localises to the cell membrane. Probably part of an ABC transporter complex. Responsible for energy coupling to the transport system. The polypeptide is Putative ABC transporter ATP-binding protein MTBMA_c05830 (Methanothermobacter marburgensis (strain ATCC BAA-927 / DSM 2133 / JCM 14651 / NBRC 100331 / OCM 82 / Marburg) (Methanobacterium thermoautotrophicum)).